Consider the following 453-residue polypeptide: Bifunctional protein GlmU (453 aa).

The tract at residues methionine 1 to lysine 225 is pyrophosphorylase. UDP-N-acetyl-alpha-D-glucosamine-binding positions include leucine 6 to glycine 9, lysine 20, glutamine 71, glycine 76 to threonine 77, tyrosine 98 to aspartate 100, glycine 135, glutamate 150, asparagine 165, and asparagine 223. Aspartate 100 contributes to the Mg(2+) binding site. Asparagine 223 contributes to the Mg(2+) binding site. Positions alanine 226–alanine 246 are linker. An N-acetyltransferase region spans residues glycine 247–serine 453. Residues arginine 329 and lysine 347 each coordinate UDP-N-acetyl-alpha-D-glucosamine. Residue histidine 359 is the Proton acceptor of the active site. Positions 362 and 373 each coordinate UDP-N-acetyl-alpha-D-glucosamine. Residues alanine 376, asparagine 382 to tyrosine 383, serine 401, and alanine 419 each bind acetyl-CoA.

It in the N-terminal section; belongs to the N-acetylglucosamine-1-phosphate uridyltransferase family. In the C-terminal section; belongs to the transferase hexapeptide repeat family. As to quaternary structure, homotrimer. Mg(2+) is required as a cofactor.

The protein localises to the cytoplasm. It carries out the reaction alpha-D-glucosamine 1-phosphate + acetyl-CoA = N-acetyl-alpha-D-glucosamine 1-phosphate + CoA + H(+). The enzyme catalyses N-acetyl-alpha-D-glucosamine 1-phosphate + UTP + H(+) = UDP-N-acetyl-alpha-D-glucosamine + diphosphate. It participates in nucleotide-sugar biosynthesis; UDP-N-acetyl-alpha-D-glucosamine biosynthesis; N-acetyl-alpha-D-glucosamine 1-phosphate from alpha-D-glucosamine 6-phosphate (route II): step 2/2. Its pathway is nucleotide-sugar biosynthesis; UDP-N-acetyl-alpha-D-glucosamine biosynthesis; UDP-N-acetyl-alpha-D-glucosamine from N-acetyl-alpha-D-glucosamine 1-phosphate: step 1/1. It functions in the pathway bacterial outer membrane biogenesis; LPS lipid A biosynthesis. Catalyzes the last two sequential reactions in the de novo biosynthetic pathway for UDP-N-acetylglucosamine (UDP-GlcNAc). The C-terminal domain catalyzes the transfer of acetyl group from acetyl coenzyme A to glucosamine-1-phosphate (GlcN-1-P) to produce N-acetylglucosamine-1-phosphate (GlcNAc-1-P), which is converted into UDP-GlcNAc by the transfer of uridine 5-monophosphate (from uridine 5-triphosphate), a reaction catalyzed by the N-terminal domain. The protein is Bifunctional protein GlmU of Burkholderia mallei (strain NCTC 10247).